The following is a 558-amino-acid chain: Magnesium-chelatase 60 kDa subunit (558 aa).

2 disordered regions span residues 234–268 (MPAS…GEEM) and 298–325 (MARG…MGRL). Residues 240–254 (APPEPEPEPPEDQPD) show a composition bias toward acidic residues. Positions 298 to 308 (MARGATGTGSA) are enriched in low complexity. One can recognise a VWFA domain in the interval 376–555 (VLIFAVDASG…HKLSNVLGAA (180 aa)).

This sequence belongs to the Mg-chelatase subunits D/I family.

It catalyses the reaction protoporphyrin IX + Mg(2+) + ATP + H2O = Mg-protoporphyrin IX + ADP + phosphate + 3 H(+). The protein operates within porphyrin-containing compound metabolism; bacteriochlorophyll biosynthesis. Involved in bacteriochlorophyll biosynthesis; introduces a magnesium ion into protoporphyrin IX to yield Mg-protoporphyrin IX. The sequence is that of Magnesium-chelatase 60 kDa subunit (bchD) from Cereibacter sphaeroides (strain ATCC 17023 / DSM 158 / JCM 6121 / CCUG 31486 / LMG 2827 / NBRC 12203 / NCIMB 8253 / ATH 2.4.1.) (Rhodobacter sphaeroides).